The primary structure comprises 581 residues: MNQNRGSTIIEIRDLWYTYPGRAETTLKGIDLKIKEGEFVLLTGPTGCGKSTLLKTLNGIIPHESEGIFSGSIKISGIETVDSGQMELSKKAGLVFQSPDDQIFSTTVEDEVAFGPENLCMEREEIDKKVDDALKMVGMSGHRLDSTNSLSGGQKQRVCIASMLAMMPEILAMDEPVSQMDPAGTQEILNTVRELNRKQNITILLVEHRIHEIAPFADRVVIMDSGKIILDQPASKAFENLEVFHRLGLRVPEPVELCHTLGIKASPFSAEETFPLLNTGNFKEKIGDYPASPGRKEKTSSPGWSSENNEPLVSVRDLWSGYDKSRMVLKGINLEIHRGERVAVMGTNGSGKSTLLLNLAAMLRPYKGNVKIFGEDTKTKNPYSFAGRIGFVFQNPDLMLFCDSTEEEAKFGPARLKLDNIEERAKISLEAMSILNLRKDLPQSLSRGQRLRTAVASILSIDPILVLLDEPTTGQDRVNIEQMMDYFKTRGSTLVFCTHDIEIAMLYATRILVMNEGQIIADGRGRDVIKDIDILRKASLTQPPVVEIASYLGIDAFSITELVDGLIHRNPEIRIAEGIKC.

In terms of domain architecture, ABC transporter 1 spans 10-250 (IEIRDLWYTY…LEVFHRLGLR (241 aa)). 44–51 (GPTGCGKS) serves as a coordination point for ATP. The disordered stretch occupies residues 287 to 309 (GDYPASPGRKEKTSSPGWSSENN). Residues 300 to 309 (SSPGWSSENN) show a composition bias toward polar residues. Residues 313-541 (VSVRDLWSGY…IDILRKASLT (229 aa)) form the ABC transporter 2 domain. 346 to 353 (GTNGSGKS) provides a ligand contact to ATP.

Belongs to the ABC transporter superfamily.

The protein localises to the cell membrane. Its function is as follows. Probably part of an ABC transporter complex. Responsible for energy coupling to the transport system. The chain is Putative ABC transporter ATP-binding protein MM_1996 from Methanosarcina mazei (strain ATCC BAA-159 / DSM 3647 / Goe1 / Go1 / JCM 11833 / OCM 88) (Methanosarcina frisia).